We begin with the raw amino-acid sequence, 745 residues long: Heterogeneous nuclear ribonucleoprotein U-like protein 2 (745 aa).

Positions 3 to 37 (VKRLKVTELRSELQRRGLDSRGLKMDLAQRLQEAL) constitute an SAP domain. Disordered regions lie at residues 44–239 (DEAG…DEEE) and 625–664 (EEARKLLPPSEKRTNRRNNRNKRNRQNRSRGQGYVGGQRR). Residues 73 to 97 (GDEEEEDDDEEEDEEALLEDEDEEP) show a composition bias toward acidic residues. Over residues 142 to 161 (GEEHDNGKGEEDGPEERSGD) the composition is skewed to basic and acidic residues. Ser-159 carries the phosphoserine modification. Thr-163 bears the Phosphothreonine mark. 5 positions are modified to phosphoserine: Ser-166, Ser-183, Ser-186, Ser-224, and Ser-226. Over residues 183 to 221 (SEKSKPAGSDGERRGVKRQRDEKDEHGRAYYEFREEAYH) the composition is skewed to basic and acidic residues. In terms of domain architecture, B30.2/SPRY spans 224–417 (SKSPPPPEEE…VELNFGQKEE (194 aa)). Acidic residues predominate over residues 230–239 (PEEEAKDEEE). Positions 625-637 (EEARKLLPPSEKR) are enriched in basic and acidic residues. The span at 638–652 (TNRRNNRNKRNRQNR) shows a compositional bias: basic residues. Arg-654, Arg-682, Arg-736, and Arg-745 each carry omega-N-methylarginine.

In terms of assembly, binds to MLF1 and retains it in the nucleus.

It localises to the nucleus. The protein is Heterogeneous nuclear ribonucleoprotein U-like protein 2 (Hnrnpul2) of Mus musculus (Mouse).